We begin with the raw amino-acid sequence, 308 residues long: Tyramine--L-glutamate ligase (308 aa).

In terms of domain architecture, ATP-grasp spans 89 to 291 (KSLLKSENID…LAELLIKNAN (203 aa)). Residue 115 to 192 (TKIIESYPVK…QEFIDGENLS (78 aa)) coordinates ATP. The Mg(2+) site is built by aspartate 252, glutamate 264, and asparagine 266. Residues aspartate 252, glutamate 264, and asparagine 266 each coordinate Mn(2+).

Mg(2+) serves as cofactor. The cofactor is Mn(2+).

The enzyme catalyses tyramine + L-glutamate + ATP = gamma-L-glutamyltyramine + ADP + phosphate + H(+). The protein operates within cofactor biosynthesis; methanofuran biosynthesis. In terms of biological role, catalyzes the formation of an amide bond between tyramine and the gamma carboxy group of L-glutamate. The enzyme also accepts phenylethylamine in vitro. This is Tyramine--L-glutamate ligase (mfnD) from Methanocaldococcus jannaschii (strain ATCC 43067 / DSM 2661 / JAL-1 / JCM 10045 / NBRC 100440) (Methanococcus jannaschii).